Consider the following 1024-residue polypeptide: Integrator complex subunit 7 homolog (1024 aa).

Composition is skewed to polar residues over residues 1 to 11 (MSKYKNSSLLN) and 19 to 36 (PSLS…QLPP). Disordered regions lie at residues 1–109 (MSKY…PTNS), 472–502 (DNNN…NNNN), and 842–863 (NNNN…NNNN). 3 stretches are compositionally biased toward low complexity: residues 44 to 77 (STNN…NNTV), 85 to 96 (TAGSSTSSASSV), and 473 to 502 (NNNN…NNNN).

This sequence belongs to the Integrator subunit 7 family. Component of the Integrator complex. The core complex associates with protein phosphatase 2A subunits, to form the Integrator-PP2A (INTAC) complex.

It is found in the nucleus. It localises to the chromosome. Its subcellular location is the cytoplasm. Its function is as follows. Component of the integrator complex, a multiprotein complex that terminates RNA polymerase II (Pol II) transcription in the promoter-proximal region of genes. The integrator complex provides a quality checkpoint during transcription elongation by driving premature transcription termination of transcripts that are unfavorably configured for transcriptional elongation: the complex terminates transcription by (1) catalyzing dephosphorylation of the C-terminal domain (CTD) of Pol II subunit polr2a, (2) degrading the exiting nascent RNA transcript via endonuclease activity and (3) promoting the release of Pol II from bound DNA. The integrator complex is also involved in terminating the synthesis of non-coding Pol II transcripts, such as enhancer RNAs (eRNAs), small nuclear RNAs (snRNAs), telomerase RNAs and long non-coding RNAs (lncRNAs). This Dictyostelium discoideum (Social amoeba) protein is Integrator complex subunit 7 homolog (ints7).